The following is a 79-amino-acid chain: Alpha-elapitoxin-Aa2e (79 aa).

Intrachain disulfides connect Cys-3/Cys-20, Cys-13/Cys-41, Cys-26/Cys-30, Cys-45/Cys-56, and Cys-57/Cys-62.

The protein belongs to the three-finger toxin family. Long-chain subfamily. Type II alpha-neurotoxin sub-subfamily. In terms of tissue distribution, expressed by the venom gland.

The protein localises to the secreted. Functionally, binds with high affinity to muscular (alpha-1/CHRNA1) and neuronal (alpha-7/CHRNA7) nicotinic acetylcholine receptor (nAChR) and inhibits acetylcholine from binding to the receptor, thereby impairing neuromuscular and neuronal transmission. Produces paralysis, clear dyspnea and lethality on mice. This Acanthophis antarcticus (Common death adder) protein is Alpha-elapitoxin-Aa2e.